The chain runs to 720 residues: Cyclic nucleotide-gated ion channel 17 (720 aa).

Residues 1 to 85 (MELRKDKLLM…SEIVLKWNWV (85 aa)) lie on the Cytoplasmic side of the membrane. A helical transmembrane segment spans residues 86–106 (FIVSCMVALFIDPLYFFVPAI). The Extracellular portion of the chain corresponds to 107–121 (GGDKNYPCARTDTSL). The chain crosses the membrane as a helical span at residues 122–142 (SILVTFFRTIADLFYLLHIFI). Residues 143–178 (KFRTGFIAPNSSTRVFGRGELVMDPKAIAWRYIKSD) lie on the Cytoplasmic side of the membrane. Residues 179–199 (FIIDLIATLPLPQIVIWFVIS) form a helical membrane-spanning segment. Residues 200 to 211 (TTKSYRFDHNNN) are Extracellular-facing. A helical membrane pass occupies residues 212–232 (AIALIVLLQYIPRFYLIIPLS). The Cytoplasmic segment spans residues 233–252 (SQIVKATGVVTKTAWAGAAY). A helical transmembrane segment spans residues 253 to 273 (NLLLYMLASHVLGAAWYILSV). At 274 to 377 (DRYTSCWKSR…LSTTMFMGET (104 aa)) the chain is on the extracellular side. Residues 378–398 (TFAVLIAIFGLVLFAHLIGNM) form a helical membrane-spanning segment. Residues 399–720 (QTYLQSLTVR…EPDFSAEHDD (322 aa)) are Cytoplasmic-facing. A nucleoside 3',5'-cyclic phosphate is bound by residues 481–605 (FFSQ…SKKL) and Glu552. The interval 597-612 (FRRLHSKKLQHTFRFY) is calmodulin-binding. Residues 617-646 (RTWAACFIQAAWRRYKRRVMENNLTAIESM) enclose the IQ domain.

The protein belongs to the cyclic nucleotide-gated cation channel (TC 1.A.1.5) family. Homotetramer or heterotetramer. Part of a functional complex containing PSKR1, BAK1, CNGC17, and AHA. Interacts with AHA1, AHA2, and BAK1, but not with PSKR1 or BRI1.

It is found in the cell membrane. In terms of biological role, probable cyclic nucleotide-gated ion channel. Forms a functional cation-translocating unit with AHAs that is activated by PSKR1/BAK1 and possibly other BAK1/RLK complexes. Required for PSK-induced protoplast expansion. In Arabidopsis thaliana (Mouse-ear cress), this protein is Cyclic nucleotide-gated ion channel 17.